We begin with the raw amino-acid sequence, 228 residues long: Tumor necrosis factor receptor superfamily member 18 (228 aa).

An N-terminal signal peptide occupies residues 1–19; that stretch reads MGAWAMLYGVSMLCVLDLG. Topologically, residues 20 to 153 are extracellular; it reads QPSVVEEPGC…EPLPTEQYGH (134 aa). 3 TNFR-Cys repeats span residues 28 to 61, 62 to 101, and 102 to 142; these read GCGP…ERCI, CVTP…FRCV, and ACAM…AVCI. 5 disulfides stabilise this stretch: C29/C44, C62/C74, C69/C82, C103/C122, and C116/C141. N36 and N40 each carry an N-linked (GlcNAc...) asparagine glycan. N-linked (GlcNAc...) asparagine glycosylation is found at N121 and N134. Residues 154–174 form a helical membrane-spanning segment; the sequence is LTVIFLVMAACIFFLTTVQLG. Topologically, residues 175-228 are cytoplasmic; that stretch reads LHIWQLRRQHMCPRETQPFAEVQLSAEDACSFQFPEEERGEQTEEKCHLGGRWP.

Binds to TRAF1, TRAF2, and TRAF3, but not TRAF5 and TRAF6. Binds through its C-terminus to SIVA1/SIVA. In terms of tissue distribution, preferentially expressed in activated T lymphocytes.

It is found in the cell membrane. Its subcellular location is the secreted. In terms of biological role, receptor for TNFSF18. Seems to be involved in interactions between activated T-lymphocytes and endothelial cells and in the regulation of T-cell receptor-mediated cell death. Mediated NF-kappa-B activation via the TRAF2/NIK pathway. This is Tumor necrosis factor receptor superfamily member 18 (Tnfrsf18) from Mus musculus (Mouse).